A 158-amino-acid polypeptide reads, in one-letter code: Cytochrome c-type biogenesis protein CcmE (158 aa).

Topologically, residues 1–8 (MNIRRRRR) are cytoplasmic. Residues 9 to 29 (LLVVVAILVGLGLATGLVMYA) form a helical; Signal-anchor for type II membrane protein membrane-spanning segment. The Periplasmic segment spans residues 30–158 (LRSNIDLFYT…GLLNVSEPTR (129 aa)). Heme-binding residues include H130 and Y134.

Belongs to the CcmE/CycJ family.

It localises to the cell inner membrane. In terms of biological role, heme chaperone required for the biogenesis of c-type cytochromes. Transiently binds heme delivered by CcmC and transfers the heme to apo-cytochromes in a process facilitated by CcmF and CcmH. This is Cytochrome c-type biogenesis protein CcmE from Tatumella citrea (Pantoea citrea).